The following is a 297-amino-acid chain: Acetylglutamate kinase (297 aa).

Residues 73–74 (GG), Arg-95, and Asn-188 contribute to the substrate site.

The protein belongs to the acetylglutamate kinase family. ArgB subfamily.

It localises to the cytoplasm. It catalyses the reaction N-acetyl-L-glutamate + ATP = N-acetyl-L-glutamyl 5-phosphate + ADP. Its pathway is amino-acid biosynthesis; L-arginine biosynthesis; N(2)-acetyl-L-ornithine from L-glutamate: step 2/4. Its function is as follows. Catalyzes the ATP-dependent phosphorylation of N-acetyl-L-glutamate. The chain is Acetylglutamate kinase from Nostoc sp. (strain PCC 7120 / SAG 25.82 / UTEX 2576).